The following is a 190-amino-acid chain: Pyridoxamine 5'-phosphate oxidase C1952.08c homolog (190 aa).

FMN is bound by residues Ser62 and Lys69.

Belongs to the pyridoxamine 5'-phosphate oxidase family. Requires FMN as cofactor.

The protein localises to the cytoplasm. Its subcellular location is the nucleus. This Schizosaccharomyces pombe (strain 972 / ATCC 24843) (Fission yeast) protein is Pyridoxamine 5'-phosphate oxidase C1952.08c homolog.